The primary structure comprises 141 residues: Large ribosomal subunit protein uL11c (141 aa).

The protein belongs to the universal ribosomal protein uL11 family. Part of the ribosomal stalk of the 50S ribosomal subunit. Interacts with L10 and the large rRNA to form the base of the stalk. L10 forms an elongated spine to which L12 dimers bind in a sequential fashion forming a multimeric L10(L12)X complex.

The protein localises to the plastid. It is found in the cyanelle. In terms of biological role, forms part of the ribosomal stalk which helps the ribosome interact with GTP-bound translation factors. The protein is Large ribosomal subunit protein uL11c of Cyanophora paradoxa.